Here is a 216-residue protein sequence, read N- to C-terminus: Ion-translocating oxidoreductase complex subunit G (216 aa).

A helical membrane pass occupies residues 14–34; the sequence is ALVLGSFGFLAASFVSIIYVI. FMN phosphoryl threonine is present on T181.

Belongs to the RnfG family. The complex is composed of six subunits: RnfA, RnfB, RnfC, RnfD, RnfE and RnfG. The cofactor is FMN.

It is found in the cell inner membrane. Part of a membrane-bound complex that couples electron transfer with translocation of ions across the membrane. This chain is Ion-translocating oxidoreductase complex subunit G, found in Buchnera aphidicola subsp. Baizongia pistaciae (strain Bp).